A 339-amino-acid polypeptide reads, in one-letter code: DNA-directed RNA polymerase subunit alpha (339 aa).

The tract at residues 1 to 234 (MIEKNWQELI…DQFQIFINFE (234 aa)) is alpha N-terminal domain (alpha-NTD). Positions 251-339 (FNPALLRKVD…DLAKRFEDHV (89 aa)) are alpha C-terminal domain (alpha-CTD).

It belongs to the RNA polymerase alpha chain family. Homodimer. The RNAP catalytic core consists of 2 alpha, 1 beta, 1 beta' and 1 omega subunit. When a sigma factor is associated with the core the holoenzyme is formed, which can initiate transcription.

The catalysed reaction is RNA(n) + a ribonucleoside 5'-triphosphate = RNA(n+1) + diphosphate. DNA-dependent RNA polymerase catalyzes the transcription of DNA into RNA using the four ribonucleoside triphosphates as substrates. In Maricaulis maris (strain MCS10) (Caulobacter maris), this protein is DNA-directed RNA polymerase subunit alpha.